Reading from the N-terminus, the 360-residue chain is Photosystem II protein D1 3 (360 aa).

Transmembrane regions (helical) follow at residues 29–46, 118–133, and 142–156; these read YVGW…AATV, HFLI…QWEL, and WICV…SATA. Residue histidine 118 coordinates chlorophyll a. Tyrosine 126 lines the pheophytin a pocket. [CaMn4O5] cluster-binding residues include aspartate 170 and glutamate 189. Residues 197–218 form a helical membrane-spanning segment; the sequence is FHMLGVAGVFGGSLFSAMHGSL. Histidine 198 is a chlorophyll a binding site. Residues histidine 215 and 264-265 contribute to the a quinone site; that span reads SF. Position 215 (histidine 215) interacts with Fe cation. Histidine 272 provides a ligand contact to Fe cation. The chain crosses the membrane as a helical span at residues 274–288; the sequence is FLAAWPVIGIWFTAL. [CaMn4O5] cluster contacts are provided by histidine 332, glutamate 333, aspartate 342, and alanine 344. The propeptide occupies 345–360; it reads AGEVAPVALTAPAING.

This sequence belongs to the reaction center PufL/M/PsbA/D family. PSII is composed of 1 copy each of membrane proteins PsbA, PsbB, PsbC, PsbD, PsbE, PsbF, PsbH, PsbI, PsbJ, PsbK, PsbL, PsbM, PsbT, PsbX, PsbY, PsbZ, Psb30/Ycf12, peripheral proteins PsbO, CyanoQ (PsbQ), PsbU, PsbV and a large number of cofactors. It forms dimeric complexes. It depends on The D1/D2 heterodimer binds P680, chlorophylls that are the primary electron donor of PSII, and subsequent electron acceptors. It shares a non-heme iron and each subunit binds pheophytin, quinone, additional chlorophylls, carotenoids and lipids. D1 provides most of the ligands for the Mn4-Ca-O5 cluster of the oxygen-evolving complex (OEC). There is also a Cl(-1) ion associated with D1 and D2, which is required for oxygen evolution. The PSII complex binds additional chlorophylls, carotenoids and specific lipids. as a cofactor. Tyr-161 forms a radical intermediate that is referred to as redox-active TyrZ, YZ or Y-Z. In terms of processing, C-terminally processed by CtpA; processing is essential to allow assembly of the oxygen-evolving complex and thus photosynthetic growth.

It is found in the cellular thylakoid membrane. It carries out the reaction 2 a plastoquinone + 4 hnu + 2 H2O = 2 a plastoquinol + O2. In terms of biological role, photosystem II (PSII) is a light-driven water:plastoquinone oxidoreductase that uses light energy to abstract electrons from H(2)O, generating O(2) and a proton gradient subsequently used for ATP formation. It consists of a core antenna complex that captures photons, and an electron transfer chain that converts photonic excitation into a charge separation. The D1/D2 (PsbA/PsbD) reaction center heterodimer binds P680, the primary electron donor of PSII as well as several subsequent electron acceptors. The chain is Photosystem II protein D1 3 from Trichormus variabilis (strain ATCC 29413 / PCC 7937) (Anabaena variabilis).